Consider the following 27-residue polypeptide: Endoglucanase gh5 (27 aa).

The Nucleophile role is filled by E6.

The catalysed reaction is Endohydrolysis of (1-&gt;4)-beta-D-glucosidic linkages in cellulose, lichenin and cereal beta-D-glucans.. With respect to regulation, activity is stimulated by zinc ions, potassium ions and DTT. Activity is inhibited by manganese and chloride ions. Endoglucanase (EG) that cleaves the internal beta-1,4-glucosidic bonds in cellulose. The chain is Endoglucanase gh5 from Fomes meliae (Fomitopsis meliae).